Reading from the N-terminus, the 509-residue chain is Scavenger receptor class B member 1 (509 aa).

The Cytoplasmic portion of the chain corresponds to 1–11; it reads MGVSSRARWVA. The helical transmembrane segment at 12 to 32 threads the bilayer; the sequence is LGLGVLGLLCAALGVIMILMV. Residues 33-440 lie on the Extracellular side of the membrane; it reads PSLIKQQVLK…YTQLVLMPQV (408 aa). Residues Asn102, Asn108, Asn116, Asn173, Asn212, Asn227, Asn255, Asn310, Asn330, and Asn383 are each glycosylated (N-linked (GlcNAc...) asparagine). Cys251 and Cys384 are oxidised to a cystine. The helical transmembrane segment at 441–461 threads the bilayer; it reads LHYAQYVLLGLGGLLLLVPII. Over 462–509 the chain is Cytoplasmic; the sequence is YQLRSQEKCFLFWSGSKKGSQDKEAMQAYSESLMSPAAKGTVLQEAKL.

This sequence belongs to the CD36 family. The C-terminal region binds to PDZK1. N-glycosylated. Post-translationally, the six cysteines of the extracellular domain are all involved in intramolecular disulfide bonds.

It is found in the cell membrane. It localises to the membrane. The protein localises to the caveola. In terms of biological role, receptor for different ligands such as phospholipids, cholesterol ester, lipoproteins, phosphatidylserine and apoptotic cells. Receptor for HDL, mediating selective uptake of cholesteryl ether and HDL-dependent cholesterol efflux. Also facilitates the flux of free and esterified cholesterol between the cell surface and apoB-containing lipoproteins and modified lipoproteins, although less efficiently than HDL. May be involved in the phagocytosis of apoptotic cells, via its phosphatidylserine binding activity. The chain is Scavenger receptor class B member 1 (Scarb1) from Rattus norvegicus (Rat).